We begin with the raw amino-acid sequence, 168 residues long: ATP synthase subunit d, mitochondrial (168 aa).

Belongs to the ATPase d subunit family. As to quaternary structure, F-type ATPases have 2 components, CF(1) - the catalytic core - and CF(0) - the membrane proton channel. CF(0) seems to have nine subunits: a, b, c, d, e, f, g, F6 and 8 (or A6L).

It is found in the mitochondrion. The protein localises to the mitochondrion inner membrane. Mitochondrial membrane ATP synthase (F(1)F(0) ATP synthase or Complex V) produces ATP from ADP in the presence of a proton gradient across the membrane which is generated by electron transport complexes of the respiratory chain. F-type ATPases consist of two structural domains, F(1) - containing the extramembraneous catalytic core, and F(0) - containing the membrane proton channel, linked together by a central stalk and a peripheral stalk. During catalysis, ATP synthesis in the catalytic domain of F(1) is coupled via a rotary mechanism of the central stalk subunits to proton translocation. Part of the complex F(0) domain and the peripheric stalk, which acts as a stator to hold the catalytic alpha(3)beta(3) subcomplex and subunit a/ATP6 static relative to the rotary elements. This is ATP synthase subunit d, mitochondrial from Arabidopsis thaliana (Mouse-ear cress).